The sequence spans 30 residues: Uperin-6.1 (30 aa).

Expressed by the skin dorsal glands.

It is found in the secreted. The chain is Uperin-6.1 from Uperoleia inundata (Floodplain toadlet).